The primary structure comprises 158 residues: Transcription elongation factor GreA (158 aa).

Positions 48–75 (NSEYDSAKEDQAFVEGRIAQLEKMIRNA) form a coiled coil.

Belongs to the GreA/GreB family.

Necessary for efficient RNA polymerase transcription elongation past template-encoded arresting sites. The arresting sites in DNA have the property of trapping a certain fraction of elongating RNA polymerases that pass through, resulting in locked ternary complexes. Cleavage of the nascent transcript by cleavage factors such as GreA or GreB allows the resumption of elongation from the new 3'terminus. GreA releases sequences of 2 to 3 nucleotides. The protein is Transcription elongation factor GreA of Shouchella clausii (strain KSM-K16) (Alkalihalobacillus clausii).